The following is a 338-amino-acid chain: Transferrin receptor subunit ESAG7 (338 aa).

The N-terminal stretch at 1–17 (MRFWFVLLALLGKEIYA) is a signal peptide. N-linked (GlcNAc...) asparagine glycosylation is found at Asn26 and Asn110. Cystine bridges form between Cys34-Cys161, Cys84-Cys311, Cys144-Cys215, and Cys230-Cys247. Asn234 is a glycosylation site (N-linked (GlcNAc...) asparagine).

Heterodimer composed of ESAG6 and ESAG7. N-glycosylated. Glycosylation is dispensable for heterodimer formation and host transferrin binding.

The protein resides in the cell membrane. Its subcellular location is the flagellar pocket. Transferrin receptor subunit involved in receptor-mediated acquisition of iron from the environment by binding host TF/transferrin. In Trypanosoma brucei brucei, this protein is Transferrin receptor subunit ESAG7.